Consider the following 276-residue polypeptide: Tryptase beta-2 (276 aa).

A signal peptide spans 1 to 21; sequence MLKRRLLLLWALSLLASLVYS. Residues 22–31 constitute a propeptide, activation peptide; sequence APRPANQRVG. Residues 32–273 form the Peptidase S1 domain; it reads IVGGHEASES…YLDWIHRYVP (242 aa). Cys60 and Cys76 are oxidised to a cystine. The Charge relay system role is filled by His75. Residue Tyr98 is modified to Phosphotyrosine. Asp122 serves as the catalytic Charge relay system. Asn133 carries N-linked (GlcNAc...) asparagine glycosylation. 3 cysteine pairs are disulfide-bonded: Cys156–Cys231, Cys189–Cys212, and Cys221–Cys249. Catalysis depends on Ser225, which acts as the Charge relay system.

The protein belongs to the peptidase S1 family. Tryptase subfamily. As to quaternary structure, homotetramer. The active tetramer is converted to inactive monomers at neutral and acidic pH in the absence of heparin. Low concentrations of inactive monomers become active monomers at pH 6.0 in the presence of heparin. When the concentration of active monomers is higher, they convert to active monomers and then to active tetramers. These monomers are active and functionally distinct from the tetrameric enzyme. In contrast to the hidden active sites in the tetrameric form, the active site of the monomeric form is accessible for macromolecular proteins and inhibitors, e.g. fibrinogen which is a substrate for the monomeric but not for the tetrameric form. The monomeric form forms a complex with SERPINB6. During embryogenesis, detected primarily in skin.

The protein resides in the secreted. The catalysed reaction is Preferential cleavage: Arg-|-Xaa, Lys-|-Xaa, but with more restricted specificity than trypsin.. Its function is as follows. Tryptase is the major neutral protease present in mast cells and is secreted upon the coupled activation-degranulation response of this cell type. Plays a role in innate immunity. In Mus musculus (Mouse), this protein is Tryptase beta-2 (Tpsb2).